Here is an 84-residue protein sequence, read N- to C-terminus: RNA-binding protein Hfq (84 aa).

The Sm domain occupies 11–71; it reads DTFLNFVRKN…ISTIMPGAPI (61 aa).

Belongs to the Hfq family. As to quaternary structure, homohexamer.

Functionally, RNA chaperone that binds small regulatory RNA (sRNAs) and mRNAs to facilitate mRNA translational regulation in response to envelope stress, environmental stress and changes in metabolite concentrations. Also binds with high specificity to tRNAs. This Beijerinckia indica subsp. indica (strain ATCC 9039 / DSM 1715 / NCIMB 8712) protein is RNA-binding protein Hfq.